Consider the following 308-residue polypeptide: MEKIAPELFLVAGNPDSFVVDDLLDFSNDDGEVDDGLNTLPDSSTLSTGTLTDSSNSSSLFTDGTGFSDLYIPNDDIAELEWLSNFVEESFAGEDQDKLHLFSGLKNPQTTGSTLTHLIKPEPELDHQFIDIDESNVAVPAKARSKRSRSAASTWASRLLSLADSDETNPKKKQRRVKEQDFAGDMDVDCGESGGGRRCLHCATEKTPQWRTGPMGPKTLCNACGVRYKSGRLVPEYRPASSPTFVMARHSNSHRKVMELRRQKEMRDEHLLSQLRCENLLMDIRSNGEDFLMHNNTNHVAPDFRHLI.

Residues 34-57 (DDGLNTLPDSSTLSTGTLTDSSNS) form a disordered region. Residues 39-57 (TLPDSSTLSTGTLTDSSNS) show a composition bias toward low complexity. The Nuclear localization signal signature appears at 142–149 (KARSKRSR). The segment at 193 to 247 (SGGGRRCLHCATEKTPQWRTGPMGPKTLCNACGVRYKSGRLVPEYRPASSPTFVM) adopts a GATA-type zinc-finger fold.

This sequence belongs to the type IV zinc-finger family. Class A subfamily.

The protein localises to the nucleus. In terms of biological role, transcriptional activator that specifically binds 5'-GATA-3' or 5'-GAT-3' motifs within gene promoters. May be involved in the regulation of some light-responsive genes. The chain is GATA transcription factor 9 (GATA9) from Arabidopsis thaliana (Mouse-ear cress).